The following is a 235-amino-acid chain: Zinc transporter ZIP9 (235 aa).

An N-linked (GlcNAc...) asparagine glycan is attached at asparagine 2. Transmembrane regions (helical) follow at residues 11–31, 75–95, 104–124, and 138–158; these read SCVP…CWWT, TTTL…GAAA, LIVF…LVSF, and HLLV…LGLS. Asparagine 169 carries N-linked (GlcNAc...) asparagine glycosylation. Transmembrane regions (helical) follow at residues 172–192 and 214–234; these read GMAM…HVLP and LEVA…VGHQ.

The protein belongs to the ZIP transporter (TC 2.A.5) family.

Its subcellular location is the golgi apparatus. The protein resides in the trans-Golgi network membrane. It localises to the cell membrane. It is found in the cytoplasm. The protein localises to the perinuclear region. Its subcellular location is the mitochondrion. The protein resides in the nucleus. The enzyme catalyses Zn(2+)(in) = Zn(2+)(out). Functionally, transports zinc ions across cell and organelle membranes into the cytoplasm and regulates intracellular zinc homeostasis. Participates in the zinc ions efflux out of the secretory compartments. Regulates intracellular zinc level, resulting in the enhancement of AKT1 and MAPK3/MAPK1 (Erk1/2) phosphorylation in response to the BCR activation. Also functions as a membrane androgen receptor that mediates, through a G protein, the non-classical androgen signaling pathway, characterized by the activation of MAPK3/MAPK1 (Erk1/2) and transcription factors CREB1 or ATF1. This pathway contributes to CLDN1 and CLDN5 expression and tight junction formation between adjacent Sertoli cells. Mediates androgen-induced vascular endothelial cell proliferation through activation of an inhibitory G protein leading to the AKT1 and MAPK3/MAPK1 (Erk1/2) activation which in turn modulate inhibition (phosphorylation) of GSK3B and CCND1 transcription. Moreover, has dual functions as a membrane-bound androgen receptor and as an androgen-dependent zinc transporter both of which are mediated through an inhibitory G protein (Gi) that mediates both MAP kinase and zinc signaling leading to the androgen-dependent apoptotic process. The protein is Zinc transporter ZIP9 of Macaca fascicularis (Crab-eating macaque).